A 233-amino-acid chain; its full sequence is Germin-like protein (233 aa).

The signal sequence occupies residues 1–22 (MEAYKMFAFVVLLATTLYQAYA). Cysteines 32 and 49 form a disulfide. Positions 63 to 215 (RGLNMPANTD…RPSISMRIWS (153 aa)) constitute a Cupin type-1 domain. H111, H113, E118, and H162 together coordinate Mn(2+).

The protein belongs to the germin family. In terms of assembly, oligomer (believed to be a pentamer but probably hexamer). As to expression, expressed at high levels in unstressed roots.

The protein resides in the secreted. The protein localises to the extracellular space. It is found in the apoplast. Its function is as follows. May be involved in seed germination. In Mesembryanthemum crystallinum (Common ice plant), this protein is Germin-like protein.